The sequence spans 457 residues: ATP synthase subunit beta (457 aa).

147 to 154 is an ATP binding site; that stretch reads GGAGVGKT.

This sequence belongs to the ATPase alpha/beta chains family. F-type ATPases have 2 components, CF(1) - the catalytic core - and CF(0) - the membrane proton channel. CF(1) has five subunits: alpha(3), beta(3), gamma(1), delta(1), epsilon(1). CF(0) has three main subunits: a(1), b(2) and c(9-12). The alpha and beta chains form an alternating ring which encloses part of the gamma chain. CF(1) is attached to CF(0) by a central stalk formed by the gamma and epsilon chains, while a peripheral stalk is formed by the delta and b chains.

It is found in the cell inner membrane. The catalysed reaction is ATP + H2O + 4 H(+)(in) = ADP + phosphate + 5 H(+)(out). Produces ATP from ADP in the presence of a proton gradient across the membrane. The catalytic sites are hosted primarily by the beta subunits. This is ATP synthase subunit beta from Haemophilus influenzae (strain 86-028NP).